The primary structure comprises 159 residues: Ribosomal RNA large subunit methyltransferase H (159 aa).

Residues Leu-76, Gly-108, and 127-132 (FSKMTF) each bind S-adenosyl-L-methionine.

It belongs to the RNA methyltransferase RlmH family. In terms of assembly, homodimer.

Its subcellular location is the cytoplasm. It catalyses the reaction pseudouridine(1915) in 23S rRNA + S-adenosyl-L-methionine = N(3)-methylpseudouridine(1915) in 23S rRNA + S-adenosyl-L-homocysteine + H(+). Its function is as follows. Specifically methylates the pseudouridine at position 1915 (m3Psi1915) in 23S rRNA. The protein is Ribosomal RNA large subunit methyltransferase H of Clostridium botulinum (strain ATCC 19397 / Type A).